We begin with the raw amino-acid sequence, 220 residues long: MSDENLLTTLDTYLASGIHIGTQQKTEDMRRFIYRVRADGLYVLDVRKTDERLRLAAKFLSNYEPEDIMAVTRRVYSVGPLKEFGKVTGINTVAGRFVPGTLTNPSAKKFAEPEVLFLSDPRVDKQALKEAIEIGIPVIGMCDTEHLTSHIDFIIPTNNKGRKSVSLMYYLIAREYMKNRGLIGEEVPFSYDQFLEKAMNVKVKMNPSNRQRGRFQRRRR.

It belongs to the universal ribosomal protein uS2 family.

This is Small ribosomal subunit protein uS2 from Methanococcus maripaludis (strain C5 / ATCC BAA-1333).